We begin with the raw amino-acid sequence, 260 residues long: Sugar fermentation stimulation protein homolog (260 aa).

It belongs to the SfsA family.

The polypeptide is Sugar fermentation stimulation protein homolog (Chloroflexus aggregans (strain MD-66 / DSM 9485)).